A 285-amino-acid polypeptide reads, in one-letter code: Putative phosphatase MG125 (285 aa).

Catalysis depends on Asp-8, which acts as the Nucleophile. Residue Asp-8 participates in Mg(2+) binding. Phosphate is bound at residue Leu-9. Asp-10 provides a ligand contact to Mg(2+). Phosphate-binding positions include 44-45 and Lys-205; that span reads TG. Mg(2+) is bound by residues Asp-228 and Ser-229. Asn-231 serves as a coordination point for phosphate.

It belongs to the HAD-like hydrolase superfamily. Cof family. It depends on Mg(2+) as a cofactor.

The chain is Putative phosphatase MG125 from Mycoplasma genitalium (strain ATCC 33530 / DSM 19775 / NCTC 10195 / G37) (Mycoplasmoides genitalium).